The following is a 152-amino-acid chain: Large-conductance mechanosensitive channel (152 aa).

Transmembrane regions (helical) follow at residues 14 to 34, 39 to 59, and 85 to 105; these read VVDMAVGIILGVAFGAIVKSL, LMPGIGILLGSADFSNLFLVI, and GLFINTIVNFIIVAFALFLVI.

The protein belongs to the MscL family. In terms of assembly, homopentamer.

The protein localises to the cell inner membrane. Functionally, channel that opens in response to stretch forces in the membrane lipid bilayer. May participate in the regulation of osmotic pressure changes within the cell. The protein is Large-conductance mechanosensitive channel of Syntrophus aciditrophicus (strain SB).